Consider the following 243-residue polypeptide: Histone H2B.2 (243 aa).

The residue at position 2 (Ala2) is a N,N,N-trimethylalanine; alternate. Ala2 bears the N,N-dimethylalanine; alternate mark. Ala2 bears the N-methylalanine; alternate mark. The interval Pro67–Asp145 is disordered. Basic and acidic residues predominate over residues Gly120 to Gln132. The segment covering Glu133–Lys142 has biased composition (basic residues).

It belongs to the histone H2B family. As to quaternary structure, the nucleosome is a histone octamer containing two molecules each of H2A, H2B, H3 and H4 assembled in one H3-H4 heterotetramer and two H2A-H2B heterodimers. The octamer wraps approximately 147 bp of DNA. In terms of processing, can be acetylated to form H2BK6ac.

It localises to the nucleus. Its subcellular location is the chromosome. Core component of nucleosome. Nucleosomes wrap and compact DNA into chromatin, limiting DNA accessibility to the cellular machineries which require DNA as a template. Histones thereby play a central role in transcription regulation, DNA repair, DNA replication and chromosomal stability. DNA accessibility is regulated via a complex set of post-translational modifications of histones, also called histone code, and nucleosome remodeling. This Arabidopsis thaliana (Mouse-ear cress) protein is Histone H2B.2.